A 414-amino-acid polypeptide reads, in one-letter code: Gamma-glutamyl phosphate reductase (414 aa).

The protein belongs to the gamma-glutamyl phosphate reductase family.

It localises to the cytoplasm. The enzyme catalyses L-glutamate 5-semialdehyde + phosphate + NADP(+) = L-glutamyl 5-phosphate + NADPH + H(+). It participates in amino-acid biosynthesis; L-proline biosynthesis; L-glutamate 5-semialdehyde from L-glutamate: step 2/2. In terms of biological role, catalyzes the NADPH-dependent reduction of L-glutamate 5-phosphate into L-glutamate 5-semialdehyde and phosphate. The product spontaneously undergoes cyclization to form 1-pyrroline-5-carboxylate. This is Gamma-glutamyl phosphate reductase from Caldanaerobacter subterraneus subsp. tengcongensis (strain DSM 15242 / JCM 11007 / NBRC 100824 / MB4) (Thermoanaerobacter tengcongensis).